We begin with the raw amino-acid sequence, 113 residues long: Nucleoid-associated protein RHA1_ro04210 (113 aa).

This sequence belongs to the YbaB/EbfC family. As to quaternary structure, homodimer.

The protein localises to the cytoplasm. It localises to the nucleoid. Binds to DNA and alters its conformation. May be involved in regulation of gene expression, nucleoid organization and DNA protection. The protein is Nucleoid-associated protein RHA1_ro04210 of Rhodococcus jostii (strain RHA1).